The sequence spans 2290 residues: Protein Ycf2 (2290 aa).

1638–1645 is an ATP binding site; the sequence is GSIGTGRS.

Belongs to the Ycf2 family.

The protein resides in the plastid. Its subcellular location is the chloroplast stroma. Functionally, probable ATPase of unknown function. Its presence in a non-photosynthetic plant (Epifagus virginiana) and experiments in tobacco indicate that it has an essential function which is probably not related to photosynthesis. The polypeptide is Protein Ycf2 (Phalaenopsis aphrodite subsp. formosana (Moth orchid)).